Here is a 270-residue protein sequence, read N- to C-terminus: 4-hydroxy-tetrahydrodipicolinate reductase (270 aa).

NAD(+)-binding positions include 8–13 (GALGRM), Asp-34, 102–104 (GTT), and 128–131 (SQNY). Residue His-160 is the Proton donor/acceptor of the active site. His-161 contacts (S)-2,3,4,5-tetrahydrodipicolinate. Lys-164 functions as the Proton donor in the catalytic mechanism. Residue 170-171 (GT) coordinates (S)-2,3,4,5-tetrahydrodipicolinate.

The protein belongs to the DapB family.

The protein resides in the cytoplasm. The enzyme catalyses (S)-2,3,4,5-tetrahydrodipicolinate + NAD(+) + H2O = (2S,4S)-4-hydroxy-2,3,4,5-tetrahydrodipicolinate + NADH + H(+). It carries out the reaction (S)-2,3,4,5-tetrahydrodipicolinate + NADP(+) + H2O = (2S,4S)-4-hydroxy-2,3,4,5-tetrahydrodipicolinate + NADPH + H(+). It participates in amino-acid biosynthesis; L-lysine biosynthesis via DAP pathway; (S)-tetrahydrodipicolinate from L-aspartate: step 4/4. Its function is as follows. Catalyzes the conversion of 4-hydroxy-tetrahydrodipicolinate (HTPA) to tetrahydrodipicolinate. The polypeptide is 4-hydroxy-tetrahydrodipicolinate reductase (Methanococcus vannielii (strain ATCC 35089 / DSM 1224 / JCM 13029 / OCM 148 / SB)).